Consider the following 544-residue polypeptide: Chaperonin GroEL (544 aa).

Residues 29-32 (TLGP), 86-90 (DGTTT), Gly413, 478-480 (NAA), and Asp494 contribute to the ATP site.

It belongs to the chaperonin (HSP60) family. Forms a cylinder of 14 subunits composed of two heptameric rings stacked back-to-back. Interacts with the co-chaperonin GroES.

It is found in the cytoplasm. It catalyses the reaction ATP + H2O + a folded polypeptide = ADP + phosphate + an unfolded polypeptide.. Together with its co-chaperonin GroES, plays an essential role in assisting protein folding. The GroEL-GroES system forms a nano-cage that allows encapsulation of the non-native substrate proteins and provides a physical environment optimized to promote and accelerate protein folding. This chain is Chaperonin GroEL, found in Lysinibacillus sphaericus (strain C3-41).